Consider the following 105-residue polypeptide: Large ribosomal subunit protein uL24 (105 aa).

Belongs to the universal ribosomal protein uL24 family. As to quaternary structure, part of the 50S ribosomal subunit.

One of two assembly initiator proteins, it binds directly to the 5'-end of the 23S rRNA, where it nucleates assembly of the 50S subunit. Functionally, one of the proteins that surrounds the polypeptide exit tunnel on the outside of the subunit. The chain is Large ribosomal subunit protein uL24 from Aeromonas hydrophila subsp. hydrophila (strain ATCC 7966 / DSM 30187 / BCRC 13018 / CCUG 14551 / JCM 1027 / KCTC 2358 / NCIMB 9240 / NCTC 8049).